The following is a 164-amino-acid chain: Bacterial ferritin (164 aa).

The Ferritin-like diiron domain occupies 1–147 (MKGKKSVISR…QQLGLIARMG (147 aa)). Fe cation contacts are provided by Glu-18, Glu-51, His-54, Glu-94, Glu-129, and His-132.

This sequence belongs to the bacterioferritin family. In terms of assembly, heterooligomer of 24 subunits, arranged as 12 dimers, that are packed together to form an approximately spherical molecule with a central cavity, in which large amounts of iron can be deposited.

It catalyses the reaction 4 Fe(2+) + O2 + 4 H(+) = 4 Fe(3+) + 2 H2O. The catalysed reaction is Fe(2+)(in) = Fe(2+)(out). In terms of biological role, iron-storage protein, whose ferroxidase center binds Fe(2+), oxidizes it using dioxygen to Fe(3+), and participates in the subsequent Fe(3+) oxide mineral core formation within the central cavity of the BFR protein shell. The chain is Bacterial ferritin from Paramagnetospirillum magnetotacticum (Aquaspirillum magnetotacticum).